We begin with the raw amino-acid sequence, 41 residues long: Large ribosomal subunit protein bL36A (41 aa).

This sequence belongs to the bacterial ribosomal protein bL36 family.

This is Large ribosomal subunit protein bL36A from Aeromonas salmonicida (strain A449).